The following is a 343-amino-acid chain: L-threonine 3-dehydrogenase (343 aa).

Residue C40 participates in Zn(2+) binding. Residues T42 and H45 each act as charge relay system in the active site. Positions 65, 66, 95, 98, 101, and 109 each coordinate Zn(2+). NAD(+) contacts are provided by residues I177, D197, R202, 264-266 (LGI), and 288-289 (IY).

This sequence belongs to the zinc-containing alcohol dehydrogenase family. Homotetramer. The cofactor is Zn(2+).

Its subcellular location is the cytoplasm. The catalysed reaction is L-threonine + NAD(+) = (2S)-2-amino-3-oxobutanoate + NADH + H(+). The protein operates within amino-acid degradation; L-threonine degradation via oxydo-reductase pathway; glycine from L-threonine: step 1/2. In terms of biological role, catalyzes the NAD(+)-dependent oxidation of L-threonine to 2-amino-3-ketobutyrate. This chain is L-threonine 3-dehydrogenase, found in Aliivibrio fischeri (strain ATCC 700601 / ES114) (Vibrio fischeri).